Reading from the N-terminus, the 458-residue chain is Jacalin-related lectin 22 (458 aa).

3 consecutive Jacalin-type lectin domains span residues 5 to 153 (YRKL…YFVL), 160 to 301 (LYKL…YFGP), and 311 to 453 (SKKL…TIVP).

Belongs to the jacalin lectin family. In terms of assembly, component of the PYK10 complex, at least composed of PYK10/BGLU23, BGLU21, BGLU22, JAL22, JAL23, PBP1/JAL30, PBP2/JAL31, JAL32, JAL33, JAL34, JAL35, GLL22 and GLL23.

Its function is as follows. Inhibitor-type lectin that may regulate the correct polymerization and activation of BGLU23/PYK10 upon tissue damage. The protein is Jacalin-related lectin 22 (JAL22) of Arabidopsis thaliana (Mouse-ear cress).